Here is a 327-residue protein sequence, read N- to C-terminus: Zinc transport protein ZntB (327 aa).

The Cytoplasmic segment spans residues 1-273; it reads MDAIKGSELQ…ARRTYTMSLM (273 aa). The chain crosses the membrane as a helical span at residues 274 to 294; it reads AMVFLPSTFLTGLFGVNLGGI. The Periplasmic segment spans residues 295-300; that stretch reads PGNSWH. Residues 301-321 traverse the membrane as a helical segment; it reads LGFSLFCLMLVVVIGGVAWWL. The Cytoplasmic segment spans residues 322–327; the sequence is HRSKWL.

The protein belongs to the CorA metal ion transporter (MIT) (TC 1.A.35) family.

It localises to the cell inner membrane. It catalyses the reaction Zn(2+)(out) + H(+)(out) = Zn(2+)(in) + H(+)(in). In terms of biological role, zinc transporter. Acts as a Zn(2+):proton symporter, which likely mediates zinc ion uptake. In Klebsiella pneumoniae subsp. pneumoniae (strain ATCC 700721 / MGH 78578), this protein is Zinc transport protein ZntB.